The primary structure comprises 330 residues: Tryptophan--tRNA ligase (330 aa).

ATP contacts are provided by residues 10–12 (QPS) and 18–19 (GN). The 'HIGH' region motif lies at 11–19 (PSGSVTLGN). Position 133 (aspartate 133) interacts with L-tryptophan. Residues 145-147 (GED), isoleucine 184, and 193-197 (KMSKS) contribute to the ATP site. The short motif at 193 to 197 (KMSKS) is the 'KMSKS' region element.

It belongs to the class-I aminoacyl-tRNA synthetase family. Homodimer.

It localises to the cytoplasm. It catalyses the reaction tRNA(Trp) + L-tryptophan + ATP = L-tryptophyl-tRNA(Trp) + AMP + diphosphate + H(+). Functionally, catalyzes the attachment of tryptophan to tRNA(Trp). The sequence is that of Tryptophan--tRNA ligase from Bacillus subtilis (strain 168).